The following is a 352-amino-acid chain: tRNA N6-adenosine threonylcarbamoyltransferase (352 aa).

Residues histidine 115 and histidine 119 each contribute to the Fe cation site. Residues 138-142 (LVSGG), aspartate 171, glycine 184, and asparagine 276 each bind substrate. Aspartate 304 contributes to the Fe cation binding site.

The protein belongs to the KAE1 / TsaD family. The cofactor is Fe(2+).

Its subcellular location is the cytoplasm. The enzyme catalyses L-threonylcarbamoyladenylate + adenosine(37) in tRNA = N(6)-L-threonylcarbamoyladenosine(37) in tRNA + AMP + H(+). Its function is as follows. Required for the formation of a threonylcarbamoyl group on adenosine at position 37 (t(6)A37) in tRNAs that read codons beginning with adenine. Is involved in the transfer of the threonylcarbamoyl moiety of threonylcarbamoyl-AMP (TC-AMP) to the N6 group of A37, together with TsaE and TsaB. TsaD likely plays a direct catalytic role in this reaction. This is tRNA N6-adenosine threonylcarbamoyltransferase from Xanthomonas axonopodis pv. citri (strain 306).